The sequence spans 541 residues: Cytosolic phospholipase A2 gamma (541 aa).

The PLA2c domain occupies 1 to 541 (MGSSEVSIIP…KDSARSCCLA (541 aa)). Ser82 serves as the catalytic Nucleophile. Positions 260 to 292 (LTLKGLWRRAVANAKSIGHLIFARLLRLQESSQ) are required for lipid droplet localization. At Ser337 the chain carries Phosphoserine. Asp385 functions as the Proton acceptor in the catalytic mechanism. Cys538 carries the cysteine methyl ester modification. A lipid anchor (S-farnesyl cysteine) is attached at Cys538. A propeptide spans 539–541 (CLA) (removed in mature form).

(Microbial infection) Interacts with HCV non-structural protein 4B/NS4B; this interaction likely initiates the recruitment of replication complexes to lipid droplets. As to expression, highly expressed in heart and skeletal muscle.

It is found in the cell membrane. The protein resides in the endoplasmic reticulum membrane. It localises to the mitochondrion membrane. The protein localises to the lipid droplet. It catalyses the reaction a 1,2-diacyl-sn-glycero-3-phosphocholine + H2O = a 1-acyl-sn-glycero-3-phosphocholine + a fatty acid + H(+). The catalysed reaction is a 1-O-alkyl-2-acyl-sn-glycero-3-phosphocholine + H2O = a 1-O-alkyl-sn-glycero-3-phosphocholine + a fatty acid + H(+). It carries out the reaction 1,2-dihexadecanoyl-sn-glycero-3-phosphocholine + H2O = 1-hexadecanoyl-sn-glycero-3-phosphocholine + hexadecanoate + H(+). The enzyme catalyses 1-hexadecanoyl-2-(9Z-octadecenoyl)-sn-glycero-3-phosphocholine + H2O = 1-hexadecanoyl-sn-glycero-3-phosphocholine + (9Z)-octadecenoate + H(+). It catalyses the reaction 1-hexadecanoyl-2-(9Z,12Z-octadecadienoyl)-sn-glycero-3-phosphocholine + H2O = (9Z,12Z)-octadecadienoate + 1-hexadecanoyl-sn-glycero-3-phosphocholine + H(+). The catalysed reaction is 1-hexadecanoyl-2-(5Z,8Z,11Z,14Z-eicosatetraenoyl)-sn-glycero-3-phosphocholine + H2O = 1-hexadecanoyl-sn-glycero-3-phosphocholine + (5Z,8Z,11Z,14Z)-eicosatetraenoate + H(+). It carries out the reaction 1-O-hexadecyl-2-(5Z,8Z,11Z,14Z)-eicosatetraenoyl-sn-glycero-3-phosphocholine + H2O = 1-O-hexadecyl-sn-glycero-3-phosphocholine + (5Z,8Z,11Z,14Z)-eicosatetraenoate + H(+). The enzyme catalyses 1-hexadecanoyl-2-(5Z,8Z,11Z,14Z-eicosatetraenoyl)-sn-glycero-3-phosphocholine + H2O = 2-(5Z,8Z,11Z,14Z)-eicosatetraenoyl-sn-glycero-3-phosphocholine + hexadecanoate + H(+). It catalyses the reaction a 1-acyl-sn-glycero-3-phosphocholine + H2O = sn-glycerol 3-phosphocholine + a fatty acid + H(+). The catalysed reaction is 1-hexadecanoyl-sn-glycero-3-phosphocholine + H2O = sn-glycerol 3-phosphocholine + hexadecanoate + H(+). It carries out the reaction 2 1-hexadecanoyl-sn-glycero-3-phosphocholine = 1,2-dihexadecanoyl-sn-glycero-3-phosphocholine + sn-glycerol 3-phosphocholine. The enzyme catalyses 1-hexadecanoyl-sn-glycero-3-phosphoethanolamine + 1-hexadecanoyl-sn-glycero-3-phosphocholine = 1,2-dihexadecanoyl-sn-glycero-3-phosphoethanolamine + sn-glycerol 3-phosphocholine. It catalyses the reaction 1-hexadecanoyl-sn-glycero-3-phosphoethanolamine + 1-hexadecanoyl-sn-glycero-3-phosphocholine = sn-glycero-3-phosphoethanolamine + 1,2-dihexadecanoyl-sn-glycero-3-phosphocholine. The catalysed reaction is 2 1-hexadecanoyl-sn-glycero-3-phosphoethanolamine = 1,2-dihexadecanoyl-sn-glycero-3-phosphoethanolamine + sn-glycero-3-phosphoethanolamine. It carries out the reaction 1-O-hexadecyl-sn-glycero-3-phosphocholine + 1-hexadecanoyl-sn-glycero-3-phosphocholine = 1-O-hexadecyl-2-hexadecanoyl-sn-glycero-3-phosphocholine + sn-glycerol 3-phosphocholine. The enzyme catalyses a 1-O-(1Z-alkenyl)-sn-glycero-3-phosphoethanolamine + 1-hexadecanoyl-sn-glycero-3-phosphocholine = 1-O-(1Z)-alkenyl-2-hexadecanoyl-sn-glycero-3-phosphoethanolamine + sn-glycerol 3-phosphocholine. It catalyses the reaction 1-O-hexadecyl-sn-glycero-3-phosphocholine + 1-hexadecanoyl-sn-glycero-3-phosphoethanolamine = 1-O-hexadecyl-2-hexadecanoyl-sn-glycero-3-phosphocholine + sn-glycero-3-phosphoethanolamine. The catalysed reaction is 1-octadecanoyl-2-(5Z,8Z,11Z,14Z)-eicosatetraenoyl-sn-glycero-3-phosphoethanolamine + 1-hexadecanoyl-sn-glycero-3-phosphocholine = 1-octadecanoyl-sn-glycero-3-phosphoethanolamine + 1-hexadecanoyl-2-(5Z,8Z,11Z,14Z-eicosatetraenoyl)-sn-glycero-3-phosphocholine. It carries out the reaction 1-octadecanoyl-2-(5Z,8Z,11Z,14Z)-eicosatetraenoyl-sn-glycero-3-phosphoethanolamine + 1-O-hexadecyl-sn-glycero-3-phosphocholine = 1-octadecanoyl-sn-glycero-3-phosphoethanolamine + 1-O-hexadecyl-2-(5Z,8Z,11Z,14Z)-eicosatetraenoyl-sn-glycero-3-phosphocholine. The enzyme catalyses 1-hexadecanoyl-2-(9Z,12Z-octadecadienoyl)-sn-glycero-3-phosphocholine + a 1-O-(1Z-alkenyl)-sn-glycero-3-phosphoethanolamine = 1-O-(1Z-alkenyl)-2-(9Z,12Z-octadecadienoyl)-sn-glycero-3-phosphoethanolamine + 1-hexadecanoyl-sn-glycero-3-phosphocholine. It catalyses the reaction 1-hexadecanoyl-2-(5Z,8Z,11Z,14Z-eicosatetraenoyl)-sn-glycero-3-phosphocholine + a 1-O-(1Z-alkenyl)-sn-glycero-3-phosphoethanolamine = 1-O-(1Z)-alkenyl-2-(5Z,8Z,11Z,14Z)-eicosatetraenoyl-sn-glycero-3-phosphoethanolamine + 1-hexadecanoyl-sn-glycero-3-phosphocholine. Not regulated by calcium, coenzyme A or ATP. Lysophospholipase activity is inhibited by palmitoyl-CoA. Lysophospholipase and O-acyltransferase activities are inhibited by methylarachidonoylfluorophosphonate. Lysophospholipase activity is inhibited by phosphatidate or lysophosphatidate. O-acyltransferase activity is up-regulated at low concentration (10-20 uM) of phosphatidate or lysophosphatidate, but inhibited at higher concentrations. Calcium-independent phospholipase, lysophospholipase and O-acyltransferase involved in phospholipid remodeling with implications in endoplasmic reticulum membrane homeostasis and lipid droplet biogenesis. Preferentially hydrolyzes the ester bond of the fatty acyl group attached at the sn-2 position of phospholipids with choline and ethanolamine head groups, producing lysophospholipids that are used in deacylation-reacylation cycles. Transfers the sn-1 fatty acyl from one lysophospholipid molecule to the sn-2 position of another lysophospholipid to form diacyl, alkylacyl and alkenylacyl glycerophospholipids. Cleaves ester bonds but not alkyl or alkenyl ether bonds at sn-1 position of lysophospholipids. Catalyzes sn-2 fatty acyl transfer from phospholipids to the sn-2 position of 1-O-alkyl or 1-O-alkenyl lysophospholipids with lower efficiency. In response to dietary fatty acids, may play a role in the formation of nascent lipid droplets from the endoplasmic reticulum likely by regulating the phospholipid composition of these organelles. Functionally, (Microbial infection) May play a role in replication and assembly of human hepatitis C virus (HCV). In response to HCV infection, promotes remodeling of host endoplasmic reticulum membranes to form organelle-like structures called membranous web, where HCV replication occur. Can further mediate translocation of replication complexes to lipid droplets to enable virion assembly. Its function is as follows. (Microbial infection) May facilitate human T-lymphotropic virus type 1 (HTLV-1) infection by promoting leukotriene B4 (LTB4) biosynthesis. LTB4 acts as a chemoattractant for HTLV-1-infected CD4-positive T cells and favors cell to cell viral transmission. The protein is Cytosolic phospholipase A2 gamma (PLA2G4C) of Homo sapiens (Human).